A 446-amino-acid chain; its full sequence is sn-2 acyl-lipid omega-3 desaturase (ferredoxin), chloroplastic (446 aa).

The transit peptide at 1–65 directs the protein to the chloroplast; it reads MANLVLSECG…DGFTRNWALN (65 aa). 2 helical membrane-spanning segments follow: residues 118–138 and 141–161; these read LSYV…AAYL and WIVW…LFVL. The Histidine box-1 signature appears at 163–167; that stretch reads HDCGH. The short motif at 199–203 is the Histidine box-2 element; sequence HRTHH. A run of 3 helical transmembrane segments spans residues 231 to 250, 279 to 299, and 302 to 322; these read RFFR…YLWA, TACW…IGPI, and LKLY…VTYL. The Histidine box-3 signature appears at 366 to 370; the sequence is HVIHH.

Belongs to the fatty acid desaturase type 1 family. As to expression, most abundant in leaves and seedlings.

Its subcellular location is the plastid. The protein localises to the chloroplast inner membrane. The catalysed reaction is a (7Z,10Z)-hexadecadienoyl-containing glycerolipid + 2 reduced [2Fe-2S]-[ferredoxin] + O2 + 2 H(+) = a (7Z,10Z,13Z)-hexadecatrienoyl-containing glycerolipid + 2 oxidized [2Fe-2S]-[ferredoxin] + 2 H2O. The enzyme catalyses a (9Z,12Z)-octadecadienoyl-containing glycerolipid + 2 reduced [2Fe-2S]-[ferredoxin] + O2 + 2 H(+) = (9Z,12Z,15Z)-octadecatrienoyl-containing glycerolipid + 2 oxidized [2Fe-2S]-[ferredoxin] + 2 H2O. It participates in lipid metabolism; polyunsaturated fatty acid biosynthesis. Chloroplast omega-3 fatty acid desaturase introduces the third double bond in the biosynthesis of 16:3 and 18:3 fatty acids, important constituents of plant membranes. It is thought to use ferredoxin as an electron donor and to act on fatty acids esterified to galactolipids, sulfolipids and phosphatidylglycerol. The polypeptide is sn-2 acyl-lipid omega-3 desaturase (ferredoxin), chloroplastic (Arabidopsis thaliana (Mouse-ear cress)).